Reading from the N-terminus, the 450-residue chain is Chromosomal replication initiator protein DnaA (450 aa).

A domain I, interacts with DnaA modulators region spans residues 1-84; that stretch reads MENIHDLWDR…AVKFIIPPNQ (84 aa). Positions 84–111 are domain II; that stretch reads QADEKLELPSSAKKQRKPYEEANDFPQS. A domain III, AAA+ region region spans residues 112 to 328; that stretch reads MLNPKYTFDT…GALIRVVAYS (217 aa). ATP-binding residues include Gly-156, Gly-158, Lys-159, and Thr-160. Residues 329–450 are domain IV, binds dsDNA; it reads SLINKEITAD…KEIQEKLKQL (122 aa).

The protein belongs to the DnaA family. In terms of assembly, oligomerizes as a right-handed, spiral filament on DNA at oriC.

Its subcellular location is the cytoplasm. Plays an essential role in the initiation and regulation of chromosomal replication. ATP-DnaA binds to the origin of replication (oriC) to initiate formation of the DNA replication initiation complex once per cell cycle. Binds the DnaA box (a 9 base pair repeat at the origin) and separates the double-stranded (ds)DNA. Forms a right-handed helical filament on oriC DNA; dsDNA binds to the exterior of the filament while single-stranded (ss)DNA is stabiized in the filament's interior. The ATP-DnaA-oriC complex binds and stabilizes one strand of the AT-rich DNA unwinding element (DUE), permitting loading of DNA polymerase. After initiation quickly degrades to an ADP-DnaA complex that is not apt for DNA replication. Binds acidic phospholipids. The chain is Chromosomal replication initiator protein DnaA from Geobacillus thermodenitrificans (strain NG80-2).